Reading from the N-terminus, the 151-residue chain is 3-hydroxyacyl-[acyl-carrier-protein] dehydratase FabZ (151 aa).

His-56 is a catalytic residue.

This sequence belongs to the thioester dehydratase family. FabZ subfamily.

It localises to the cytoplasm. The catalysed reaction is a (3R)-hydroxyacyl-[ACP] = a (2E)-enoyl-[ACP] + H2O. Involved in unsaturated fatty acids biosynthesis. Catalyzes the dehydration of short chain beta-hydroxyacyl-ACPs and long chain saturated and unsaturated beta-hydroxyacyl-ACPs. The chain is 3-hydroxyacyl-[acyl-carrier-protein] dehydratase FabZ from Rhodopseudomonas palustris (strain HaA2).